The sequence spans 645 residues: Threonine--tRNA ligase (645 aa).

The TGS domain occupies 1 to 63; the sequence is MEQINIQFPD…ETDGSIEIVT (63 aa). Residues 242 to 540 form a catalytic region; sequence DHRKIGKELE…LTEETKGAFP (299 aa). The Zn(2+) site is built by Cys336, His387, and His517.

This sequence belongs to the class-II aminoacyl-tRNA synthetase family. As to quaternary structure, homodimer. The cofactor is Zn(2+).

The protein resides in the cytoplasm. The catalysed reaction is tRNA(Thr) + L-threonine + ATP = L-threonyl-tRNA(Thr) + AMP + diphosphate + H(+). Its function is as follows. Catalyzes the attachment of threonine to tRNA(Thr) in a two-step reaction: L-threonine is first activated by ATP to form Thr-AMP and then transferred to the acceptor end of tRNA(Thr). Also edits incorrectly charged L-seryl-tRNA(Thr). This is Threonine--tRNA ligase from Staphylococcus aureus (strain JH1).